The sequence spans 471 residues: uncharacterized protein (471 aa).

4 consecutive transmembrane segments (helical) span residues 10–30 (ALWL…LFVI), 46–66 (IDDR…WFAI), 87–107 (TLII…LYFS), and 280–300 (IVVG…LYFA).

Belongs to the bacterial sugar transferase family.

The protein localises to the cell membrane. It functions in the pathway glycan metabolism; exopolysaccharide biosynthesis. Its function is as follows. May function as a sugar transferase. This is an uncharacterized protein from Haemophilus influenzae (strain ATCC 51907 / DSM 11121 / KW20 / Rd).